The sequence spans 431 residues: Histidinol dehydrogenase (431 aa).

The NAD(+) site is built by Tyr-127, Gln-185, and Asn-208. Substrate is bound by residues Ser-234, Gln-256, and His-259. Residues Gln-256 and His-259 each coordinate Zn(2+). Active-site proton acceptor residues include Glu-323 and His-324. Substrate-binding residues include His-324, Asp-357, Glu-411, and His-416. Asp-357 provides a ligand contact to Zn(2+). Position 416 (His-416) interacts with Zn(2+).

The protein belongs to the histidinol dehydrogenase family. Requires Zn(2+) as cofactor.

It carries out the reaction L-histidinol + 2 NAD(+) + H2O = L-histidine + 2 NADH + 3 H(+). Its pathway is amino-acid biosynthesis; L-histidine biosynthesis; L-histidine from 5-phospho-alpha-D-ribose 1-diphosphate: step 9/9. Functionally, catalyzes the sequential NAD-dependent oxidations of L-histidinol to L-histidinaldehyde and then to L-histidine. The sequence is that of Histidinol dehydrogenase from Vibrio vulnificus (strain YJ016).